The chain runs to 138 residues: Prefoldin subunit alpha (138 aa).

The protein belongs to the prefoldin subunit alpha family. In terms of assembly, heterohexamer of two alpha and four beta subunits.

The protein localises to the cytoplasm. Molecular chaperone capable of stabilizing a range of proteins. Seems to fulfill an ATP-independent, HSP70-like function in archaeal de novo protein folding. The protein is Prefoldin subunit alpha of Methanosphaera stadtmanae (strain ATCC 43021 / DSM 3091 / JCM 11832 / MCB-3).